The chain runs to 451 residues: tRNA modification GTPase MnmE (451 aa).

(6S)-5-formyl-5,6,7,8-tetrahydrofolate contacts are provided by Arg25, Glu82, and Lys121. Residues 217-374 enclose the TrmE-type G domain; it reads GMSVVILGRP…LKQHLKTEMG (158 aa). Asn227 provides a ligand contact to K(+). Residues 227–232, 246–252, and 271–274 each bind GTP; these read NAGKSS, TDIAGTT, and DTAG. Ser231 provides a ligand contact to Mg(2+). K(+) is bound by residues Thr246, Ile248, and Thr251. Thr252 is a Mg(2+) binding site. Lys451 lines the (6S)-5-formyl-5,6,7,8-tetrahydrofolate pocket.

This sequence belongs to the TRAFAC class TrmE-Era-EngA-EngB-Septin-like GTPase superfamily. TrmE GTPase family. Homodimer. Heterotetramer of two MnmE and two MnmG subunits. It depends on K(+) as a cofactor.

It is found in the cytoplasm. Functionally, exhibits a very high intrinsic GTPase hydrolysis rate. Involved in the addition of a carboxymethylaminomethyl (cmnm) group at the wobble position (U34) of certain tRNAs, forming tRNA-cmnm(5)s(2)U34. This is tRNA modification GTPase MnmE from Hydrogenovibrio crunogenus (strain DSM 25203 / XCL-2) (Thiomicrospira crunogena).